The primary structure comprises 278 residues: Diaminopimelate epimerase (278 aa).

The substrate site is built by Asn13, Gln49, and Asn68. The active-site Proton donor is the Cys77. Substrate is bound by residues 78–79 (GN), Asn161, Asn194, and 212–213 (ER). Cys221 acts as the Proton acceptor in catalysis. Position 222–223 (222–223 (GT)) interacts with substrate.

It belongs to the diaminopimelate epimerase family. Homodimer.

It is found in the cytoplasm. The catalysed reaction is (2S,6S)-2,6-diaminopimelate = meso-2,6-diaminopimelate. It participates in amino-acid biosynthesis; L-lysine biosynthesis via DAP pathway; DL-2,6-diaminopimelate from LL-2,6-diaminopimelate: step 1/1. Catalyzes the stereoinversion of LL-2,6-diaminopimelate (L,L-DAP) to meso-diaminopimelate (meso-DAP), a precursor of L-lysine and an essential component of the bacterial peptidoglycan. The polypeptide is Diaminopimelate epimerase (Nitrosomonas eutropha (strain DSM 101675 / C91 / Nm57)).